Consider the following 962-residue polypeptide: MGPFSSASDRNSAAATAAPATATATPSPLSKTPSAATSDDSSTSKKFLKRLNILPLRSRTRNIADFHIRPDDPHRKYSAGDHVQGAVVLTVVKPVRITHLTVLLHGYVRVYKGPGAQNNEPVRSPAEIKNISSRGERKKYYNGYASLFQDEQVLSSDGRLEPGRYEFNFDLLFPEKGLPSSIDFERGTISYMITATLTRPTSVAPTTSCERKIYLMEQLDVGPLAPPKAQTVDLRPISKRAKKKRPAGGDRRSVISSERLSADVPAESLSDGDSARINDTSTEGSLSIVGDDVGQEGFSQAPRSVSHSEVRSLSGDSAASLSTHPSRAYSETNQLAIVGSAMTGKRISFADERTIKLRVEVLKGGCLPGDVIPVKVSVNHIKMIKSMHGVIVTLFRQGRIDSSPLQLSKEDWKKSESDDYYYPKSRTGLSGLSLSSAGSCSMFRKDLSQAFAPLITDPVNFSATLTTSVRVPEDSFPTIKGVPGEMISFRYFVEVIVDLGGKLANHLQGGASSGSRVGATGVVGTPFENVGTLPSWGATGSTSILDTDRLKRIQGVIPGYYEVIVGTTDSNRSRGKGPQRPSLTHTPSVTGGSNYVENEYNEKGGWPNSMHDDDGYGPESANPHDDYASYPPQTTYPHGYVQQPPYWNYVPDSSQHEQAIPAPHYIPPPDLPDENSLTEKERIRRAEQRLLPSQPPIAAASSSSFSAAVPSPSASSHVPDSSLLLNGDNIYDAEDDVPTPAATPATASPFDHALAPVYTPTPAEDLPSAPTLEELDRPPPISRGPSHHPPSTTEDKQELERRRLLAEASAPPEFPEDYIPDEGGGPVTPAGPSGSRAGPSAPPPAPPVAFEPSAPVLFENDEDYHGGGYTAGGPSFPSAASGNGGHEEETVPEYTYNNHRPGSVGAVTVVGNPSSPVLAPASAFFPASGSGNVHDSPREQGQQARSDSSSPPPIEYLPRYER.

Disordered regions lie at residues 1-43 (MGPF…DSST), 225-326 (APPK…THPS), 568-675 (TDSN…PDEN), and 689-962 (RLLP…RYER). The span at 237 to 246 (ISKRAKKKRP) shows a compositional bias: basic residues. Polar residues-rich tracts occupy residues 297–307 (GFSQAPRSVSH), 314–326 (SGDS…THPS), and 581–596 (PSLT…SNYV). Composition is skewed to low complexity over residues 696–722 (PIAA…PDSS) and 738–747 (PTPAATPATA). The segment covering 793 to 805 (TEDKQELERRRLL) has biased composition (basic and acidic residues). Residues 830-839 (AGPSGSRAGP) are compositionally biased toward low complexity. Residues 840-849 (SAPPPAPPVA) are compositionally biased toward pro residues. Positions 913-928 (PSSPVLAPASAFFPAS) are enriched in low complexity. A compositionally biased stretch (polar residues) spans 929 to 949 (GSGNVHDSPREQGQQARSDSS).

Belongs to the arrestin family. PalF/RIM8 subfamily.

In terms of biological role, required for the proteolytic cleavage of the transcription factor pacc-1 in response to alkaline ambient pH. The sequence is that of pH-response regulator protein palF/prr-3 (prr-3) from Neurospora crassa (strain ATCC 24698 / 74-OR23-1A / CBS 708.71 / DSM 1257 / FGSC 987).